The chain runs to 520 residues: 2-isopropylmalate synthase (520 aa).

The region spanning 12 to 274 (IRIFDTTLRD…DTAINTPRIV (263 aa)) is the Pyruvate carboxyltransferase domain. Positions 21, 209, 211, and 245 each coordinate Mn(2+). The interval 396-520 (RLASMTISDV…VVAGKTAAVA (125 aa)) is regulatory domain.

It belongs to the alpha-IPM synthase/homocitrate synthase family. LeuA type 1 subfamily. In terms of assembly, homodimer. Mn(2+) is required as a cofactor.

It is found in the cytoplasm. The enzyme catalyses 3-methyl-2-oxobutanoate + acetyl-CoA + H2O = (2S)-2-isopropylmalate + CoA + H(+). It functions in the pathway amino-acid biosynthesis; L-leucine biosynthesis; L-leucine from 3-methyl-2-oxobutanoate: step 1/4. Functionally, catalyzes the condensation of the acetyl group of acetyl-CoA with 3-methyl-2-oxobutanoate (2-ketoisovalerate) to form 3-carboxy-3-hydroxy-4-methylpentanoate (2-isopropylmalate). In Xanthomonas campestris pv. campestris (strain B100), this protein is 2-isopropylmalate synthase.